The following is a 531-amino-acid chain: Polypyrimidine tract-binding protein 2 (531 aa).

M1 carries the N-acetylmethionine modification. Phosphoserine occurs at positions 26 and 27. RRM domains follow at residues 59–133 and 181–257; these read RVLH…YSNH and LRII…FSKL. The residue at position 308 (S308) is a Phosphoserine. RRM domains lie at 338-412 and 455-529; these read TVLL…LSKH and ATLH…FSKS.

Monomer. Interacts with NOVA1; the interaction is direct. Identified in a mRNP complex, at least composed of DHX9, DDX3X, ELAVL1, HNRNPU, IGF2BP1, ILF3, PABPC1, PCBP2, PTBP2, STAU1, STAU2, SYNCRIP and YBX1. Part of a ternary complex containing KHSRP and HNRPH1. Interacts with NOVA2; the interaction is direct.

It is found in the nucleus. In terms of biological role, RNA-binding protein which binds to intronic polypyrimidine tracts and mediates negative regulation of exons splicing. May antagonize in a tissue-specific manner the ability of NOVA1 to activate exon selection. In addition to its function in pre-mRNA splicing, plays also a role in the regulation of translation. This Rattus norvegicus (Rat) protein is Polypyrimidine tract-binding protein 2.